The following is a 308-amino-acid chain: Mitoferrin (308 aa).

A run of 6 helical transmembrane segments spans residues 13-29, 69-89, 111-131, 168-184, 213-233, and 285-302; these read GGSFYVHLIAGAAAGFA, ITGLFRGLTAVAAGAAPSHAV, IKVGIAGAIATMTSEAVASPM, YTTTLVMNVPYNIVYFA, LVAGGGAGMLAAAFTNPFDVV, and MVFHSMSSAIVWSVYEYF. Solcar repeat units follow at residues 14–100, 108–192, and 207–305; these read GSFY…LKFK, HHPI…LKKI, and YQLI…FKFI.

The protein belongs to the mitochondrial carrier (TC 2.A.29) family.

The protein resides in the mitochondrion inner membrane. Functionally, mitochondrial solute carriers shuttle metabolites, nucleotides, and cofactors through the mitochondrial inner membrane. Mitochondrial iron transporter that mediates iron uptake. Probably required for heme synthesis of hemoproteins and Fe-S cluster assembly. The sequence is that of Mitoferrin (mcfF) from Dictyostelium discoideum (Social amoeba).